Consider the following 419-residue polypeptide: Serine hydroxymethyltransferase 2 (419 aa).

(6S)-5,6,7,8-tetrahydrofolate is bound by residues Leu120 and 124-126; that span reads GHL. The residue at position 229 (Lys229) is an N6-(pyridoxal phosphate)lysine.

It belongs to the SHMT family. In terms of assembly, homodimer. Pyridoxal 5'-phosphate is required as a cofactor.

The protein localises to the cytoplasm. It carries out the reaction (6R)-5,10-methylene-5,6,7,8-tetrahydrofolate + glycine + H2O = (6S)-5,6,7,8-tetrahydrofolate + L-serine. It participates in one-carbon metabolism; tetrahydrofolate interconversion. It functions in the pathway amino-acid biosynthesis; glycine biosynthesis; glycine from L-serine: step 1/1. Its function is as follows. Catalyzes the reversible interconversion of serine and glycine with tetrahydrofolate (THF) serving as the one-carbon carrier. This reaction serves as the major source of one-carbon groups required for the biosynthesis of purines, thymidylate, methionine, and other important biomolecules. Also exhibits THF-independent aldolase activity toward beta-hydroxyamino acids, producing glycine and aldehydes, via a retro-aldol mechanism. This Salmonella typhi protein is Serine hydroxymethyltransferase 2.